The sequence spans 152 residues: 3-dehydroquinate dehydratase (152 aa).

The active-site Proton acceptor is the Tyr26. Residues Asn77, His83, and Asp90 each contribute to the substrate site. His103 serves as the catalytic Proton donor. Substrate contacts are provided by residues 104-105 and Arg114; that span reads LS.

This sequence belongs to the type-II 3-dehydroquinase family. As to quaternary structure, homododecamer.

It catalyses the reaction 3-dehydroquinate = 3-dehydroshikimate + H2O. It participates in metabolic intermediate biosynthesis; chorismate biosynthesis; chorismate from D-erythrose 4-phosphate and phosphoenolpyruvate: step 3/7. In terms of biological role, catalyzes a trans-dehydration via an enolate intermediate. The protein is 3-dehydroquinate dehydratase of Tolumonas auensis (strain DSM 9187 / NBRC 110442 / TA 4).